A 698-amino-acid chain; its full sequence is Glycine--tRNA ligase beta subunit (698 aa).

The protein belongs to the class-II aminoacyl-tRNA synthetase family. Tetramer of two alpha and two beta subunits.

It is found in the cytoplasm. It catalyses the reaction tRNA(Gly) + glycine + ATP = glycyl-tRNA(Gly) + AMP + diphosphate. This Xanthomonas campestris pv. campestris (strain B100) protein is Glycine--tRNA ligase beta subunit.